We begin with the raw amino-acid sequence, 242 residues long: N-glycosylase/DNA lyase (242 aa).

Glutamine 25, serine 52, and tryptophan 63 together coordinate 8-oxoguanine. The tract at residues lysine 119–arginine 183 is helix-hairpin-helix. Lysine 143 (schiff-base intermediate with DNA) is an active-site residue. 8-oxoguanine is bound by residues phenylalanine 147 and proline 173. Aspartate 175 is a catalytic residue. Residues aspartate 209 and tryptophan 213 each contribute to the 8-oxoguanine site.

This sequence belongs to the archaeal N-glycosylase/DNA lyase (AGOG) family.

The enzyme catalyses 2'-deoxyribonucleotide-(2'-deoxyribose 5'-phosphate)-2'-deoxyribonucleotide-DNA = a 3'-end 2'-deoxyribonucleotide-(2,3-dehydro-2,3-deoxyribose 5'-phosphate)-DNA + a 5'-end 5'-phospho-2'-deoxyribonucleoside-DNA + H(+). In terms of biological role, DNA repair enzyme that is part of the base excision repair (BER) pathway; protects from oxidative damage by removing the major product of DNA oxidation, 8-oxoguanine (GO), from single- and double-stranded DNA substrates. In Methanopyrus kandleri (strain AV19 / DSM 6324 / JCM 9639 / NBRC 100938), this protein is N-glycosylase/DNA lyase.